Reading from the N-terminus, the 331-residue chain is Olfactory receptor 7D11 (331 aa).

Residues 1 to 25 lie on the Extracellular side of the membrane; the sequence is MEIENHTLITKFLILGLSDDPELQP. N-linked (GlcNAc...) asparagine glycosylation is present at Asn5. Residues 26–46 form a helical membrane-spanning segment; the sequence is ILFGLFLSMYLVTLLGNLLII. At 47–57 the chain is on the cytoplasmic side; it reads LAVSSDSHLHK. A helical membrane pass occupies residues 58-78; the sequence is PMYFLLSNLSFIDICFISTTI. The Extracellular portion of the chain corresponds to 79-97; sequence PKMLVNMQSQIKDISYIEC. Cys97 and Cys179 are joined by a disulfide. A helical transmembrane segment spans residues 98–118; it reads LTQVFFFNIFAGMDNFLLTLM. Residues 119 to 142 are Cytoplasmic-facing; that stretch reads AYDRFVAICHPLNYTVIMNPRLCA. Residues 143–163 traverse the membrane as a helical segment; sequence LLILMFWIIMFWVSLIHVLLM. The Extracellular segment spans residues 164–196; the sequence is NELNFSRGTEIPHFFCELAQVLKVSNSDNHVNN. The N-linked (GlcNAc...) asparagine glycan is linked to Asn167. Residues 197–217 form a helical membrane-spanning segment; it reads VFMYVVTSLLGVIPMTGILMS. Residues 218–244 are Cytoplasmic-facing; it reads YSQIFSSLFRMSSTVSKYKAFSTCGSH. Residues 245–265 traverse the membrane as a helical segment; the sequence is LCVVTLFYGSGFGVYFSSSVV. The Extracellular segment spans residues 266 to 271; the sequence is HSTQRR. The helical transmembrane segment at 272–292 threads the bilayer; sequence KVASLMYTVISPMLNPFIYTL. Over 293 to 331 the chain is Cytoplasmic; sequence RNKDVKGALGKLFNRVASSPSCINDIRNKLLLRSVRQIL.

This sequence belongs to the G-protein coupled receptor 1 family.

It is found in the cell membrane. Functionally, possible olfactory or taste receptor. This chain is Olfactory receptor 7D11, found in Mus musculus (Mouse).